The following is a 467-amino-acid chain: MNELNKTPKEIVKELDQYIVGQQAAKKSVAVALRNRYRRLQLEENMQQDITPKNLLMIGPTGVGKTEIARRLAKIVNAPFVKVEATKFTEVGYVGRDVESMVRDLVENAIQIVEKQQYSRVYAQALKKANQRLVKVLVPGIKKEQKQAGGNQFEQMMNMFNMAQQQQEAQEEVTEDIRTNRRTILEQLEKGLLDNREVTIEIEEPKKTMPAMNNGLEQMGIDLNETLGALSPKKKIERTVTVKEAQELLVKEESAKIVNDADIHSEAIRLAESSGIIFIDEIDKITSKSQQNSGEVSREGVQRDILPIVEGSQVNTKYGPLQTDHILFIASGAFHLSKPSDLIPELQGRFPIRVELDDLTADDFVSILTEPNNALIKQYVALIGTENVSVIFTKEAIERLAHIAYDVNRDTDNIGARRLHTILERLLEDLLYEAPDMQMGEITITEAYVNEKLNDIVQNEDLSRYIL.

Residues Val20, 62–67 (GVGKTE), Asp280, Glu345, and Arg417 contribute to the ATP site.

Belongs to the ClpX chaperone family. HslU subfamily. A double ring-shaped homohexamer of HslV is capped on each side by a ring-shaped HslU homohexamer. The assembly of the HslU/HslV complex is dependent on binding of ATP.

It is found in the cytoplasm. Functionally, ATPase subunit of a proteasome-like degradation complex; this subunit has chaperone activity. The binding of ATP and its subsequent hydrolysis by HslU are essential for unfolding of protein substrates subsequently hydrolyzed by HslV. HslU recognizes the N-terminal part of its protein substrates and unfolds these before they are guided to HslV for hydrolysis. This chain is ATP-dependent protease ATPase subunit HslU, found in Enterococcus faecalis (strain ATCC 700802 / V583).